Reading from the N-terminus, the 327-residue chain is Putative HTH-type transcriptional regulatory protein Mbar_A2318 (327 aa).

Residues 132–190 (LKKARMGQSMSLGTLASMVGVSRRTISKYEEEGMDASIDVVLQLEDIFGVELAKPINIL) enclose the HTH cro/C1-type domain. A DNA-binding region (H-T-H motif) is located at residues 143 to 162 (LGTLASMVGVSRRTISKYEE).

This is Putative HTH-type transcriptional regulatory protein Mbar_A2318 from Methanosarcina barkeri (strain Fusaro / DSM 804).